The chain runs to 207 residues: Small ribosomal subunit protein uS5 (207 aa).

The segment at 1–51 (MTDTPTKQEITSKNDKVPGAIPGEQKKNNRNNDRKRNRRGDSKNLERDSDW) is disordered. Over residues 24 to 51 (EQKKNNRNNDRKRNRRGDSKNLERDSDW) the composition is skewed to basic and acidic residues. In terms of domain architecture, S5 DRBM spans 51–114 (WQERVVQIRR…SDGKKNLVRV (64 aa)).

The protein belongs to the universal ribosomal protein uS5 family. In terms of assembly, part of the 30S ribosomal subunit. Contacts proteins S4 and S8.

With S4 and S12 plays an important role in translational accuracy. In terms of biological role, located at the back of the 30S subunit body where it stabilizes the conformation of the head with respect to the body. The chain is Small ribosomal subunit protein uS5 from Prochlorococcus marinus (strain MIT 9312).